The following is a 220-amino-acid chain: N-(5'-phosphoribosyl)anthranilate isomerase (220 aa).

It belongs to the TrpF family.

It carries out the reaction N-(5-phospho-beta-D-ribosyl)anthranilate = 1-(2-carboxyphenylamino)-1-deoxy-D-ribulose 5-phosphate. The protein operates within amino-acid biosynthesis; L-tryptophan biosynthesis; L-tryptophan from chorismate: step 3/5. The polypeptide is N-(5'-phosphoribosyl)anthranilate isomerase (Xylella fastidiosa (strain M23)).